The chain runs to 248 residues: Probable transcriptional regulatory protein Oter_1471 (248 aa).

This sequence belongs to the TACO1 family.

It localises to the cytoplasm. The chain is Probable transcriptional regulatory protein Oter_1471 from Opitutus terrae (strain DSM 11246 / JCM 15787 / PB90-1).